The sequence spans 151 residues: MLLYIILGLLILVGDQLLKGWIVANVSYGALHTVIPNILGLTYVQNDGAAWSMLAGQQWFFYIVTIIAVGVIGYLFYTSERSEKLYRIGLTLMLAGALGNFIDRLHLKYVVDMFQLEFINFPIFNVADTALTCGVICVFIAILLKEKVTHD.

The next 3 membrane-spanning stretches (helical) occupy residues 3–23, 59–79, and 85–107; these read LYII…GWIV, WFFY…FYTS, and LYRI…RLHL. Active-site residues include Asp112 and Asp128. Residues 123–143 traverse the membrane as a helical segment; that stretch reads IFNVADTALTCGVICVFIAIL.

The protein belongs to the peptidase A8 family.

The protein resides in the cell membrane. The enzyme catalyses Release of signal peptides from bacterial membrane prolipoproteins. Hydrolyzes -Xaa-Yaa-Zaa-|-(S,diacylglyceryl)Cys-, in which Xaa is hydrophobic (preferably Leu), and Yaa (Ala or Ser) and Zaa (Gly or Ala) have small, neutral side chains.. The protein operates within protein modification; lipoprotein biosynthesis (signal peptide cleavage). Functionally, this protein specifically catalyzes the removal of signal peptides from prolipoproteins. The chain is Lipoprotein signal peptidase from Latilactobacillus sakei subsp. sakei (strain 23K) (Lactobacillus sakei subsp. sakei).